We begin with the raw amino-acid sequence, 701 residues long: Glycine--tRNA ligase beta subunit (701 aa).

The protein belongs to the class-II aminoacyl-tRNA synthetase family. In terms of assembly, tetramer of two alpha and two beta subunits.

The protein localises to the cytoplasm. The catalysed reaction is tRNA(Gly) + glycine + ATP = glycyl-tRNA(Gly) + AMP + diphosphate. The polypeptide is Glycine--tRNA ligase beta subunit (Thiobacillus denitrificans (strain ATCC 25259 / T1)).